A 195-amino-acid chain; its full sequence is PAP fimbrial minor pilin protein (195 aa).

An N-terminal signal peptide occupies residues Met1–Ala22. A disulfide bridge connects residues Cys58 and Cys97.

It belongs to the fimbrial protein family.

The protein localises to the secreted. The protein resides in the fimbrium. Functionally, fimbriae (also called pili), polar filaments radiating from the surface of the bacterium to a length of 0.5-1.5 micrometers and numbering 100-300 per cell, enable bacteria to colonize the epithelium of specific host organs. In terms of biological role, papH seems to anchor the pilus to the bacterial cell. In addition the stoichiometric relationship between PapH and PapA determines the pilus length. This is PAP fimbrial minor pilin protein (papH) from Escherichia coli.